Here is a 260-residue protein sequence, read N- to C-terminus: Proteasome subunit alpha (260 aa).

Belongs to the peptidase T1A family. In terms of assembly, the 20S proteasome core is composed of 14 alpha and 14 beta subunits that assemble into four stacked heptameric rings, resulting in a barrel-shaped structure. The two inner rings, each composed of seven catalytic beta subunits, are sandwiched by two outer rings, each composed of seven alpha subunits. The catalytic chamber with the active sites is on the inside of the barrel. Has a gated structure, the ends of the cylinder being occluded by the N-termini of the alpha-subunits. Is capped at one or both ends by the proteasome regulatory ATPase, PAN.

It localises to the cytoplasm. The formation of the proteasomal ATPase PAN-20S proteasome complex, via the docking of the C-termini of PAN into the intersubunit pockets in the alpha-rings, triggers opening of the gate for substrate entry. Interconversion between the open-gate and close-gate conformations leads to a dynamic regulation of the 20S proteasome proteolysis activity. Component of the proteasome core, a large protease complex with broad specificity involved in protein degradation. The sequence is that of Proteasome subunit alpha from Pyrococcus abyssi (strain GE5 / Orsay).